A 940-amino-acid chain; its full sequence is Alanine--tRNA ligase (940 aa).

Zn(2+)-binding residues include histidine 581, histidine 585, cysteine 683, and histidine 687.

It belongs to the class-II aminoacyl-tRNA synthetase family. Zn(2+) serves as cofactor.

The protein localises to the cytoplasm. The enzyme catalyses tRNA(Ala) + L-alanine + ATP = L-alanyl-tRNA(Ala) + AMP + diphosphate. Functionally, catalyzes the attachment of alanine to tRNA(Ala) in a two-step reaction: alanine is first activated by ATP to form Ala-AMP and then transferred to the acceptor end of tRNA(Ala). Also edits incorrectly charged Ser-tRNA(Ala) and Gly-tRNA(Ala) via its editing domain. This chain is Alanine--tRNA ligase, found in Leptospira borgpetersenii serovar Hardjo-bovis (strain JB197).